The chain runs to 248 residues: UPF0736 protein BCE33L1074 (248 aa).

The protein belongs to the UPF0736 family.

This chain is UPF0736 protein BCE33L1074, found in Bacillus cereus (strain ZK / E33L).